The sequence spans 612 residues: uncharacterized protein (612 aa).

A run of 6 helical transmembrane segments spans residues 13–33, 38–58, 67–87, 107–127, 144–164, and 189–209; these read IPLT…EWLP, AILV…EGIA, TIMA…IQII, GFIV…AIFL, LLIP…LGTS, and LGLL…PILL. 2 consecutive RCK C-terminal domains span residues 218 to 302 and 316 to 403; these read GNVA…ERGI and NNAG…LLVL. 6 consecutive transmembrane segments (helical) span residues 419–439, 459–479, 501–521, 525–545, 546–566, and 586–606; these read AIAI…PISV, IYGA…PLGT, LSGY…TEIL, ATVV…GLNP, LAFM…PIGY, and IGAP…MLIY.

It belongs to the SLC13A/DASS transporter (TC 2.A.47) family. NADC subfamily.

It localises to the cell membrane. This is an uncharacterized protein from Synechocystis sp. (strain ATCC 27184 / PCC 6803 / Kazusa).